The chain runs to 206 residues: Outer-membrane lipoprotein carrier protein (206 aa).

The signal sequence occupies residues 1–21 (MTRLLFVLVLSVCLLPVPVKA).

This sequence belongs to the LolA family. As to quaternary structure, monomer.

The protein resides in the periplasm. Its function is as follows. Participates in the translocation of lipoproteins from the inner membrane to the outer membrane. Only forms a complex with a lipoprotein if the residue after the N-terminal Cys is not an aspartate (The Asp acts as a targeting signal to indicate that the lipoprotein should stay in the inner membrane). This Nitrosomonas europaea (strain ATCC 19718 / CIP 103999 / KCTC 2705 / NBRC 14298) protein is Outer-membrane lipoprotein carrier protein.